The primary structure comprises 246 residues: MYLLVDVGNTHSVFSITEDGKTFRRWRLSTGVFQTEDELFSHLHPLLGDTMREIKGIGVASVVPTQNTVIERFSQKYFHISPIWVKAKDGCVKWNVKNPSEVGADRVANVVAFVKEYGKNGIIIDMGTATTVDLVVNGSYEGGAILPGLFMMVHSLFRGTAKLPLVEVKPADFVVGKDTEENIRLGVVNGSVYALEGIIGRMKEVYGDLPVVLTGGQSKIVKDMIKHEIFDEDLTIKGVYHFCFGD.

6–13 (DVGNTHSV) provides a ligand contact to ATP. A substrate-binding site is contributed by 103 to 106 (GADR). Residue Asp105 is the Proton acceptor of the active site. Asp125 contacts K(+). Thr128 provides a ligand contact to ATP. Thr179 contributes to the substrate binding site.

This sequence belongs to the type III pantothenate kinase family. In terms of assembly, homodimer. NH4(+) serves as cofactor. Requires K(+) as cofactor.

The protein resides in the cytoplasm. The catalysed reaction is (R)-pantothenate + ATP = (R)-4'-phosphopantothenate + ADP + H(+). Its pathway is cofactor biosynthesis; coenzyme A biosynthesis; CoA from (R)-pantothenate: step 1/5. Its function is as follows. Catalyzes the phosphorylation of pantothenate (Pan), the first step in CoA biosynthesis. The polypeptide is Type III pantothenate kinase (Thermotoga sp. (strain RQ2)).